Reading from the N-terminus, the 605-residue chain is uncharacterized protein (605 aa).

Residues 56 to 78 (ILWSSIAAACVILFAAYKTGAYF) form a helical membrane-spanning segment.

Its subcellular location is the cell membrane. This is an uncharacterized protein from Bacillus subtilis (strain 168).